The chain runs to 236 residues: uncharacterized protein (236 aa).

The RPE1 insert domain maps to 117 to 160 (RYLSKQTDRNEFITTAESYIGISKHKSTNITYKLPLKEQFCNMS).

This is an uncharacterized protein from Rickettsia prowazekii (strain Madrid E).